Consider the following 378-residue polypeptide: Putative F-box/kelch-repeat protein At3g43710 (378 aa).

Residues 23–69 (TFGIEMLPDDLVLSCLARVPRMYYPILSLVSKRFRSFLTSTELYQTR) form the F-box domain. Kelch repeat units lie at residues 130-176 (NIYV…VLDG), 178-227 (IYVA…GYDG), and 262-308 (SQCV…VPTK).

This is Putative F-box/kelch-repeat protein At3g43710 from Arabidopsis thaliana (Mouse-ear cress).